The chain runs to 294 residues: Chelated iron transport system membrane protein YfeC (294 aa).

The next 8 helical transmembrane spans lie at A17–L37, V51–F71, A93–N113, I140–F160, I169–V189, T194–L214, L221–F241, and A246–A266.

The protein belongs to the ABC-3 integral membrane protein family.

Its subcellular location is the cell inner membrane. Its function is as follows. Part of an ATP-driven transport system YfeABC for chelated iron. This chain is Chelated iron transport system membrane protein YfeC (yfeC), found in Yersinia pestis.